The primary structure comprises 145 residues: Ornithine decarboxylase antizyme (145 aa).

The protein belongs to the ODC antizyme family. In terms of assembly, interacts with ODC1 and thereby sterically blocks ODC homodimerization.

Its function is as follows. Ornithine decarboxylase (ODC) antizyme protein that negatively regulates ODC activity and intracellular polyamine biosynthesis and uptake in response to increased intracellular polyamine levels. Binds to ODC monomers, inhibiting the assembly of the functional ODC homodimer, and targets the monomers for ubiquitin-independent proteolytic destruction by the 26S proteasome. This Onchocerca volvulus protein is Ornithine decarboxylase antizyme.